The primary structure comprises 277 residues: Carbonyl reductase [NADPH] 1 (277 aa).

S2 bears the N-acetylserine mark. S2 is subject to Phosphoserine. NADP(+) contacts are provided by residues 10-34, 63-64, and N90; these read VTGA…GDVV and DI. Glutathione-binding positions include 95-97 and Q106; that span reads FKV. Substrate is bound at residue S140. 193–194 contacts glutathione; it reads AY. Y194 (proton acceptor) is an active-site residue. NADP(+)-binding positions include 194–198 and 231–233; these read YGVTK and VRT. K239 is modified (N6-1-carboxyethyl lysine). Residues 258-277 are disordered; that stretch reads PPGAEGPHGQFVQDKKVEPW.

The protein belongs to the short-chain dehydrogenases/reductases (SDR) family. As to quaternary structure, monomer.

It localises to the cytoplasm. The catalysed reaction is a secondary alcohol + NADP(+) = a ketone + NADPH + H(+). It carries out the reaction prostaglandin F2alpha + NADP(+) = prostaglandin E2 + NADPH + H(+). The enzyme catalyses prostaglandin E1 + NADP(+) = 15-oxoprostaglandin E1 + NADPH + H(+). It catalyses the reaction menadione + NADPH + H(+) = menadiol + NADP(+). The catalysed reaction is prostaglandin D2 + NADP(+) = 15-oxoprostaglandin D2 + NADPH + H(+). It carries out the reaction prostaglandin E2 + NADP(+) = 15-oxoprostaglandin E2 + NADPH + H(+). The enzyme catalyses prostaglandin F2alpha + NADP(+) = 15-oxoprostaglandin F2alpha + NADPH + H(+). It catalyses the reaction daunorubicin + NADPH + H(+) = 13-dihydrodaunorubicin + NADP(+). The catalysed reaction is S-nitrosoglutathione + NADPH + H(+) = S-(hydroxysulfenamide)glutathione + NADP(+). It carries out the reaction a primary alcohol + NADP(+) = an aldehyde + NADPH + H(+). The enzyme catalyses cortisol + NADPH + H(+) = 20beta-dihydrocortisol + NADP(+). It catalyses the reaction corticosterone + NADPH + H(+) = 20beta-dihydrocorticosterone + NADP(+). NADPH-dependent reductase with broad substrate specificity. Catalyzes the reduction of a wide variety of carbonyl compounds including quinones, prostaglandins, menadione, plus various xenobiotics. Catalyzes the reduction of the antitumor anthracyclines doxorubicin and daunorubicin to the cardiotoxic compounds doxorubicinol and daunorubicinol. Can convert prostaglandin E to prostaglandin F2-alpha. Can bind glutathione, which explains its higher affinity for glutathione-conjugated substrates. Catalyzes the reduction of S-nitrosoglutathione. In addition, participates in the glucocorticoid metabolism by catalyzing the NADPH-dependent cortisol/corticosterone into 20beta-dihydrocortisol (20b-DHF) or 20beta-corticosterone (20b-DHB), which are weak agonists of NR3C1 and NR3C2 in adipose tissue. This is Carbonyl reductase [NADPH] 1 from Rattus norvegicus (Rat).